A 114-amino-acid polypeptide reads, in one-letter code: U10-agatoxin-Ao1a (114 aa).

Positions 1–15 (MCVATCLCTFAYVLA) are cleaved as a signal peptide. Positions 16-32 (KSDEGENLISKVEETQR) are excised as a propeptide. Intrachain disulfides connect C34–C53, C41–C59, C50–C86, C52–C76, and C61–C74. A disordered region spans residues 95-114 (GSQNPSLCKDPNPRRRRHGK).

It belongs to the neurotoxin 04 (omega-agtx) family. 03 (type II/III omega-agtx) subfamily. In terms of tissue distribution, expressed by the venom gland.

It localises to the secreted. In terms of biological role, inhibits voltage-gated calcium channels (Cav). The sequence is that of U10-agatoxin-Ao1a from Agelena orientalis (Funnel-web spider).